The following is a 350-amino-acid chain: Biotin synthase (350 aa).

Residues 38-256 (NYVQVSTLLS…IAIARIMMPQ (219 aa)) enclose the Radical SAM core domain. Residues C53, C57, and C60 each coordinate [4Fe-4S] cluster. [2Fe-2S] cluster-binding residues include C97, C128, C188, and R260.

The protein belongs to the radical SAM superfamily. Biotin synthase family. As to quaternary structure, homodimer. The cofactor is [4Fe-4S] cluster. [2Fe-2S] cluster serves as cofactor.

It carries out the reaction (4R,5S)-dethiobiotin + (sulfur carrier)-SH + 2 reduced [2Fe-2S]-[ferredoxin] + 2 S-adenosyl-L-methionine = (sulfur carrier)-H + biotin + 2 5'-deoxyadenosine + 2 L-methionine + 2 oxidized [2Fe-2S]-[ferredoxin]. Its pathway is cofactor biosynthesis; biotin biosynthesis; biotin from 7,8-diaminononanoate: step 2/2. Catalyzes the conversion of dethiobiotin (DTB) to biotin by the insertion of a sulfur atom into dethiobiotin via a radical-based mechanism. This chain is Biotin synthase, found in Vibrio campbellii (strain ATCC BAA-1116).